A 288-amino-acid chain; its full sequence is Pyridoxal kinase PdxY (288 aa).

Substrate is bound by residues S12 and 47–48 (TQ). ATP-binding positions include D114, E151, K184, and 211–214 (RPLL). Substrate is bound at residue D225.

Belongs to the pyridoxine kinase family. PdxY subfamily. In terms of assembly, homodimer. It depends on Mg(2+) as a cofactor.

It catalyses the reaction pyridoxal + ATP = pyridoxal 5'-phosphate + ADP + H(+). It participates in cofactor metabolism; pyridoxal 5'-phosphate salvage; pyridoxal 5'-phosphate from pyridoxal: step 1/1. Its function is as follows. Pyridoxal kinase involved in the salvage pathway of pyridoxal 5'-phosphate (PLP). Catalyzes the phosphorylation of pyridoxal to PLP. The sequence is that of Pyridoxal kinase PdxY from Pseudomonas syringae pv. syringae (strain B728a).